Consider the following 535-residue polypeptide: uncharacterized protein (535 aa).

Disordered stretches follow at residues 1 to 58 (MSMK…PRGP), 211 to 254 (EPPK…PPCI), 313 to 353 (RRVA…EQVK), 376 to 416 (RPDK…DQRL), 421 to 440 (QGLD…DAAW), and 508 to 535 (SLFE…SRRD). Residues 22–34 (IRRDPWFGGRDNE) are compositionally biased toward basic and acidic residues. The SNW stretch occupies residues 179-342 (AQYIRYTPSQ…KARQERSAMR (164 aa)). Basic and acidic residues predominate over residues 376 to 393 (RPDKADKLRKERERDISE). Residues 511-535 (EHTKEKKRGGDGGDSRGESKRSRRD) are compositionally biased toward basic and acidic residues.

Belongs to the SNW family.

This is an uncharacterized protein from Caenorhabditis elegans.